The chain runs to 924 residues: Probable dipeptidyl-aminopeptidase B (924 aa).

A compositionally biased stretch (polar residues) spans methionine 1–arginine 12. The disordered stretch occupies residues methionine 1 to glycine 102. Over methionine 1–arginine 111 the chain is Cytoplasmic. Basic and acidic residues predominate over residues glycine 14 to proline 23. The segment covering serine 31 to isoleucine 43 has biased composition (polar residues). A compositionally biased stretch (basic and acidic residues) spans arginine 47–proline 58. The span at asparagine 87–alanine 100 shows a compositional bias: low complexity. Residues tryptophan 112–valine 132 form a helical; Signal-anchor for type II membrane protein membrane-spanning segment. Over serine 133–alanine 924 the chain is Vacuolar. 2 N-linked (GlcNAc...) asparagine glycosylation sites follow: asparagine 231 and asparagine 364. The active-site Charge relay system is the serine 768. Asparagine 827 carries N-linked (GlcNAc...) asparagine glycosylation. Active-site charge relay system residues include aspartate 845 and histidine 878.

It belongs to the peptidase S9B family.

It localises to the vacuole membrane. It catalyses the reaction Release of an N-terminal dipeptide, Xaa-Yaa-|-Zaa-, from a polypeptide, preferentially when Yaa is Pro, provided Zaa is neither Pro nor hydroxyproline.. In terms of biological role, type IV dipeptidyl-peptidase which removes N-terminal dipeptides sequentially from polypeptides having unsubstituted N-termini provided that the penultimate residue is proline. The protein is Probable dipeptidyl-aminopeptidase B (dapB) of Neurospora crassa (strain ATCC 24698 / 74-OR23-1A / CBS 708.71 / DSM 1257 / FGSC 987).